The primary structure comprises 280 residues: Cobalt import ATP-binding protein CbiO (280 aa).

Residues 2-236 form the ABC transporter domain; the sequence is IEVRDLRFHY…GDWLRQQGLG (235 aa). 36-43 lines the ATP pocket; that stretch reads GANGCGKT.

This sequence belongs to the ABC transporter superfamily. Cobalt importer (TC 3.A.1.18.1) family. In terms of assembly, forms an energy-coupling factor (ECF) transporter complex composed of an ATP-binding protein (A component, CbiO), a transmembrane protein (T component, CbiQ) and 2 possible substrate-capture proteins (S components, CbiM and CbiN) of unknown stoichimetry.

The protein resides in the cell inner membrane. It participates in cofactor biosynthesis; adenosylcobalamin biosynthesis. Part of the energy-coupling factor (ECF) transporter complex CbiMNOQ involved in cobalt import. Presumably responsible for energy coupling to the transport system. This Syntrophus aciditrophicus (strain SB) protein is Cobalt import ATP-binding protein CbiO.